The primary structure comprises 111 residues: Probable 4-amino-4-deoxy-L-arabinose-phosphoundecaprenol flippase subunit ArnE (111 aa).

Transmembrane regions (helical) follow at residues 36-56 (IVLWLGLALACIGLAMMLWLL), 61-81 (VPVGIAYPMLSLNFVWVTLAA), and 88-108 (PVSPRHWCGVAFIIGGIVILG). The region spanning 40–109 (LGLALACIGL…IIGGIVILGS (70 aa)) is the EamA domain.

It belongs to the ArnE family. As to quaternary structure, heterodimer of ArnE and ArnF.

The protein resides in the cell inner membrane. It participates in bacterial outer membrane biogenesis; lipopolysaccharide biosynthesis. Its function is as follows. Translocates 4-amino-4-deoxy-L-arabinose-phosphoundecaprenol (alpha-L-Ara4N-phosphoundecaprenol) from the cytoplasmic to the periplasmic side of the inner membrane. This chain is Probable 4-amino-4-deoxy-L-arabinose-phosphoundecaprenol flippase subunit ArnE, found in Shigella flexneri serotype 5b (strain 8401).